The chain runs to 277 residues: Thiazole synthase (277 aa).

K107 acts as the Schiff-base intermediate with DXP in catalysis. Residues G168, 194-195 (AG), and 216-217 (AS) contribute to the 1-deoxy-D-xylulose 5-phosphate site.

This sequence belongs to the ThiG family. In terms of assembly, homotetramer. Forms heterodimers with either ThiH or ThiS.

The protein resides in the cytoplasm. The catalysed reaction is [ThiS sulfur-carrier protein]-C-terminal-Gly-aminoethanethioate + 2-iminoacetate + 1-deoxy-D-xylulose 5-phosphate = [ThiS sulfur-carrier protein]-C-terminal Gly-Gly + 2-[(2R,5Z)-2-carboxy-4-methylthiazol-5(2H)-ylidene]ethyl phosphate + 2 H2O + H(+). The protein operates within cofactor biosynthesis; thiamine diphosphate biosynthesis. Catalyzes the rearrangement of 1-deoxy-D-xylulose 5-phosphate (DXP) to produce the thiazole phosphate moiety of thiamine. Sulfur is provided by the thiocarboxylate moiety of the carrier protein ThiS. In vitro, sulfur can be provided by H(2)S. The sequence is that of Thiazole synthase from Cutibacterium acnes (strain DSM 16379 / KPA171202) (Propionibacterium acnes).